The following is a 241-amino-acid chain: UDP-2,3-diacylglucosamine hydrolase (241 aa).

Residues Asp-9, His-11, Asp-42, Asn-79, and His-114 each coordinate Mn(2+). 79–80 (NR) lines the substrate pocket. Positions 122, 160, 164, 167, and 195 each coordinate substrate. The Mn(2+) site is built by His-195 and His-197.

It belongs to the LpxH family. Mn(2+) serves as cofactor.

It localises to the cell inner membrane. It carries out the reaction UDP-2-N,3-O-bis[(3R)-3-hydroxytetradecanoyl]-alpha-D-glucosamine + H2O = 2-N,3-O-bis[(3R)-3-hydroxytetradecanoyl]-alpha-D-glucosaminyl 1-phosphate + UMP + 2 H(+). It functions in the pathway glycolipid biosynthesis; lipid IV(A) biosynthesis; lipid IV(A) from (3R)-3-hydroxytetradecanoyl-[acyl-carrier-protein] and UDP-N-acetyl-alpha-D-glucosamine: step 4/6. Its function is as follows. Hydrolyzes the pyrophosphate bond of UDP-2,3-diacylglucosamine to yield 2,3-diacylglucosamine 1-phosphate (lipid X) and UMP by catalyzing the attack of water at the alpha-P atom. Involved in the biosynthesis of lipid A, a phosphorylated glycolipid that anchors the lipopolysaccharide to the outer membrane of the cell. This chain is UDP-2,3-diacylglucosamine hydrolase, found in Shewanella frigidimarina (strain NCIMB 400).